An 88-amino-acid chain; its full sequence is Elongation factor 1-beta (88 aa).

It belongs to the EF-1-beta/EF-1-delta family.

Functionally, promotes the exchange of GDP for GTP in EF-1-alpha/GDP, thus allowing the regeneration of EF-1-alpha/GTP that could then be used to form the ternary complex EF-1-alpha/GTP/AAtRNA. The protein is Elongation factor 1-beta of Natronomonas pharaonis (strain ATCC 35678 / DSM 2160 / CIP 103997 / JCM 8858 / NBRC 14720 / NCIMB 2260 / Gabara) (Halobacterium pharaonis).